We begin with the raw amino-acid sequence, 695 residues long: GATA zinc finger domain-containing protein 16 (695 aa).

Disordered stretches follow at residues 82–111, 134–304, and 422–472; these read SPIL…SNNA, VVNS…QQDK, and NNQF…KMRY. 2 stretches are compositionally biased toward low complexity: residues 87 to 111 and 140 to 149; these read SQQQ…SNNA and KTTTTNNKPP. Residues 150–174 are a coiled coil; that stretch reads KQSKRKEKERLEEEKQTVAQQQQYQ. Residues 155–165 are compositionally biased toward basic and acidic residues; the sequence is KEKERLEEEKQ. A compositionally biased stretch (polar residues) spans 199 to 209; that stretch reads VSTTPYGNSQF. Residues 210-298 show a composition bias toward low complexity; that stretch reads NNNNNNNNNN…NSNSNNNNNN (89 aa). A compositionally biased stretch (polar residues) spans 422–433; that stretch reads NNQFSGDKQSAL. A compositionally biased stretch (low complexity) spans 434-446; that stretch reads NNVKNSKGGNTNN. Residues 479–504 form a GATA-type zinc finger; sequence CHTCGVTNTPEWRRGPNGAKTLCNAC. The segment at 523 to 646 is disordered; that stretch reads NSTGVNITEP…TTNSITTPTT (124 aa). 2 stretches are compositionally biased toward low complexity: residues 544 to 556 and 564 to 646; these read DNNN…SDSN and GSNN…TPTT.

The protein is GATA zinc finger domain-containing protein 16 (gtaP) of Dictyostelium discoideum (Social amoeba).